Here is a 111-residue protein sequence, read N- to C-terminus: Wound-induced proteinase inhibitor 1 (111 aa).

The signal sequence occupies residues 1–23 (MESKFAHIIVFFLLATSFETLMA). Residues 24-36 (RKEIDGPEVIELL) constitute a propeptide that is removed on maturation.

Belongs to the protease inhibitor I13 (potato type I serine protease inhibitor) family.

The protein resides in the secreted. The polypeptide is Wound-induced proteinase inhibitor 1 (PIIF) (Solanum lycopersicum (Tomato)).